We begin with the raw amino-acid sequence, 293 residues long: Bifunctional monothiol glutaredoxin-S16, chloroplastic (293 aa).

The transit peptide at 1–62 (MAAITISSSL…APSRRRSFFI (62 aa)) directs the protein to the chloroplast. An intrachain disulfide couples C123 to C219. The Glutaredoxin domain occupies 194–293 (EELIDRLVKE…ENGELANILN (100 aa)). K211 contributes to the glutathione binding site. Position 219 (C219) interacts with [2Fe-2S] cluster. Glutathione-binding positions include R251, F263, and 276 to 277 (CD).

It belongs to the glutaredoxin family. CGFS subfamily. As to quaternary structure, [2Fe-2S]-bridged holo-homodimer. Interacts in vitro with SUFE1, BOLA1, BOLA2 and BOLA4. Interacts in vivo only with SUFE1, BOLA1 and BOLA4. Interacts with SBP1.

It is found in the plastid. The protein localises to the chloroplast. The formation of an intramolecular disulfide bond negatively regulates both the N-terminal endonuclease and the C-terminal glutaredoxin activities. Its function is as follows. May only reduce GSH-thiol disulfides, but not protein disulfides. Participates probably to the maturation of iron-sulfur proteins and to the regulation of the redox state of the BOLA proteins. The GRXS16-BOLA1 heterodimer binds a labile, oxygen sensitive iron-sulfur cluster. Able to cleave linearized DNA in vitro. This chain is Bifunctional monothiol glutaredoxin-S16, chloroplastic, found in Arabidopsis thaliana (Mouse-ear cress).